The sequence spans 469 residues: Dihydroorotate dehydrogenase (quinone), mitochondrial (469 aa).

The transit peptide at M1 to L37 directs the protein to the mitochondrion. A helical transmembrane segment spans residues L62–D82. Residues A150–K154 and S174 each bind FMN. K154 contacts substrate. N199–F203 is a substrate binding site. A disordered region spans residues H219–G247. Residues T227 to S236 are compositionally biased toward low complexity. Residues N252 and N283 each contribute to the FMN site. N283–N288 contacts substrate. Catalysis depends on S286, which acts as the Nucleophile. Residues K328 and S356 each contribute to the FMN site. N357–T358 lines the substrate pocket. Residues G380, G409, and Y430 to T431 each bind FMN.

It belongs to the dihydroorotate dehydrogenase family. Type 2 subfamily. It depends on FMN as a cofactor.

Its subcellular location is the mitochondrion inner membrane. The catalysed reaction is (S)-dihydroorotate + a quinone = orotate + a quinol. It participates in pyrimidine metabolism; UMP biosynthesis via de novo pathway; orotate from (S)-dihydroorotate (quinone route): step 1/1. Its function is as follows. Catalyzes the conversion of dihydroorotate to orotate with quinone as electron acceptor. The sequence is that of Dihydroorotate dehydrogenase (quinone), mitochondrial (PYRD) from Oryza sativa subsp. japonica (Rice).